The following is a 131-amino-acid chain: Small ribosomal subunit protein uS8 (131 aa).

Belongs to the universal ribosomal protein uS8 family. As to quaternary structure, part of the 30S ribosomal subunit. Contacts proteins S5 and S12.

In terms of biological role, one of the primary rRNA binding proteins, it binds directly to 16S rRNA central domain where it helps coordinate assembly of the platform of the 30S subunit. This is Small ribosomal subunit protein uS8 from Solibacter usitatus (strain Ellin6076).